The primary structure comprises 567 residues: uncharacterized protein (567 aa).

12 consecutive transmembrane segments (helical) span residues leucine 136–alanine 156, phenylalanine 159–isoleucine 179, leucine 193–phenylalanine 213, leucine 217–valine 237, isoleucine 258–glycine 278, leucine 291–glutamate 311, phenylalanine 334–valine 354, leucine 364–methionine 384, leucine 393–isoleucine 415, proline 426–phenylalanine 446, threonine 457–isoleucine 477, and alanine 536–leucine 553.

The protein belongs to the major facilitator superfamily.

The protein resides in the membrane. This is an uncharacterized protein from Schizosaccharomyces pombe (strain 972 / ATCC 24843) (Fission yeast).